The following is a 357-amino-acid chain: MKKKVAEYLNRLAEVEIKISNPEIFSNSKEYSALSKEHSYLLELKNAYDKILNLEKVLADDKQALAIEKDPEMVVMLEEGINENKVELEKLNKILESLLVPPDPDDDLNVIMELRAGTGGEEAALFVGDCVRMYHLYASSKGWKYEVLSASESDLKGYKEYVMGISGTGVKRLLQYEAGTHRVQRVPETETQGRVHTSAITIAVLPEPSEEDTELLINEKDLKIDTFRASGAGGQHVNVTDSAVRITHLPTGVVVTCQDERSQHKNKDKAMRILKARIRDAEMQKRHNEASAMRSAQVGSGDRSERIRTYNFSQNRVTDHRIGLTLYNLDKVMEGDLDPITTAMVSHAYHQLLEHGN.

Glutamine 235 carries the N5-methylglutamine modification. The interval 285-305 is disordered; sequence KRHNEASAMRSAQVGSGDRSE.

This sequence belongs to the prokaryotic/mitochondrial release factor family. Methylated by PrmC. Methylation increases the termination efficiency of RF1.

It is found in the cytoplasm. In terms of biological role, peptide chain release factor 1 directs the termination of translation in response to the peptide chain termination codons UAG and UAA. This Chlamydia pneumoniae (Chlamydophila pneumoniae) protein is Peptide chain release factor 1 (prfA).